A 192-amino-acid chain; its full sequence is Ion-translocating oxidoreductase complex subunit B (192 aa).

The segment at 1–26 is hydrophobic; sequence MNAIWIAVAAVSLLGLAFGAILGYAS. Positions 32-91 constitute a 4Fe-4S domain; it reads EDDPVVEKIDEILPQSQCGQCGYPGCRPYAETISCNGEKINRCAPGGEAVMLKIAELLNV. [4Fe-4S] cluster-binding residues include C49, C52, C57, C74, C117, C120, C123, C127, C147, C150, C153, and C157. 4Fe-4S ferredoxin-type domains follow at residues 108–137 and 138–167; these read MVAV…GATR and AMHT…LQPV.

The protein belongs to the 4Fe4S bacterial-type ferredoxin family. RnfB subfamily. As to quaternary structure, the complex is composed of six subunits: RsxA, RsxB, RsxC, RsxD, RsxE and RsxG. It depends on [4Fe-4S] cluster as a cofactor.

The protein resides in the cell inner membrane. Part of a membrane-bound complex that couples electron transfer with translocation of ions across the membrane. Required to maintain the reduced state of SoxR. The chain is Ion-translocating oxidoreductase complex subunit B from Escherichia coli O6:K15:H31 (strain 536 / UPEC).